Consider the following 329-residue polypeptide: Protein-arginine N-acetylglucosaminyltransferase NleB1 (329 aa).

The N-beta-linked (GlcNAc) arginine; by autocatalysis glycan is linked to arginine 13. Residue glutamine 48–phenylalanine 50 participates in UDP-N-acetyl-alpha-D-glucosamine binding. Residue arginine 53 is glycosylated (N-beta-linked (GlcNAc) arginine; by autocatalysis). A UDP-N-acetyl-alpha-D-glucosamine-binding site is contributed by tyrosine 72. A glycan (N-beta-linked (GlcNAc) arginine; by autocatalysis) is linked at arginine 159. Tyrosine 219–alanine 222 contributes to the UDP-N-acetyl-alpha-D-glucosamine binding site. The short motif at aspartate 221–aspartate 223 is the DXD motif element. Mn(2+) is bound at residue aspartate 223. The active-site Proton acceptor is the glutamate 253. Arginine 293 carries an N-beta-linked (GlcNAc) arginine; by autocatalysis glycan. Mn(2+)-binding residues include asparagine 320 and serine 322. UDP-N-acetyl-alpha-D-glucosamine-binding positions include serine 322 and serine 327–tryptophan 329.

The protein belongs to the glycosyltransferase NleB family. Mn(2+) serves as cofactor. In terms of processing, auto-glycosylated: arginine GlcNAcylation is required for activity toward death domain-containing host target proteins.

It localises to the secreted. Its subcellular location is the host cytoplasm. The catalysed reaction is L-arginyl-[protein] + UDP-N-acetyl-alpha-D-glucosamine = N(omega)-(N-acetyl-beta-D-glucosaminyl)-L-arginyl-[protein] + UDP + H(+). Protein-arginine N-acetylglucosaminyltransferase activity is inhibited by 100066N compound (flavone analog) and 102644N compound (a substituted isoxazole). Functionally, protein-arginine N-acetylglucosaminyltransferase effector that disrupts TNF signaling in infected cells, including NF-kappa-B signaling, apoptosis and necroptosis. Acts by catalyzing the transfer of a single N-acetylglucosamine (GlcNAc) to a conserved arginine residue in the death domain of host proteins such as FADD: arginine GlcNAcylation prevents homotypic/heterotypic death domain interactions and assembly of the oligomeric TNF-alpha receptor complex, thereby disrupting TNF signaling. Also acts on host proteins without a death domain: catalyzes arginine GlcNAcylation of host GAPDH protein, thereby preventing GAPDH interaction with TRAF2, leading to inhibit NF-kappa-B signaling. Catalyzes auto-GlcNAcylation, which is required for activity toward death domain-containing host target proteins. This is Protein-arginine N-acetylglucosaminyltransferase NleB1 from Escherichia coli O157:H7.